The following is a 589-amino-acid chain: Protein PAF1 homolog (589 aa).

The segment covering 1–54 (MASYRPPYPPLPQPPSQNSLAPPPPPPSLPPPVPPPPPSHQPYSYPPPPPPPPH) has biased composition (pro residues). Disordered stretches follow at residues 1 to 180 (MASY…PLLT) and 542 to 589 (GVYS…DYSE). A compositionally biased stretch (low complexity) spans 55–65 (AYYQQGPHYPQ). Positions 71–87 (APPPPPPPSAPPPLVPD) are enriched in pro residues. The segment covering 88–116 (PPRHQGPNDHEKGASKQVGRRERAKPDPS) has biased composition (basic and acidic residues). The segment covering 117–127 (KHHHRSHLPHS) has biased composition (basic residues). Residues 126–159 (HSKKIETEEERRLRKKRELEKQRQDEKHRQQMKN) are a coiled coil. Over residues 128–154 (KKIETEEERRLRKKRELEKQRQDEKHR) the composition is skewed to basic and acidic residues.

This sequence belongs to the PAF1 family. Component of the nuclear PAF1 complex (PAF1C), which consists of VIP2/ELF7/PAF1, VIP3/SKI8/WDR61, VIP4/LEO1, VIP5/RTF1, VIP6/ELF8/CTR9 and CDC73. As to expression, expressed in roots, leaves and shoot apex.

The protein resides in the nucleus. Its function is as follows. Component of the PAF1 complex (PAF1C) which is involved in histone modifications such as methylation on histone H3 'Lys-4' (H3K4me3). Involved in regulation of flowering time. Required for the expression of the flowering repressors and MAD-box genes FLC, AGL27/FLM and AGL31/MAF2. Required for histone H3 trimethylation on 'Lys-4' H3K4me3 at the FLC and AGL27/FLM loci. Involved in the control of seed dormancy and germination. The sequence is that of Protein PAF1 homolog from Arabidopsis thaliana (Mouse-ear cress).